The chain runs to 652 residues: Threonine--tRNA ligase (652 aa).

A TGS domain is found at methionine 1–threonine 63. The segment at aspartate 246 to proline 545 is catalytic. Zn(2+)-binding residues include cysteine 340, histidine 391, and histidine 522.

This sequence belongs to the class-II aminoacyl-tRNA synthetase family. As to quaternary structure, homodimer. Zn(2+) serves as cofactor.

It localises to the cytoplasm. It carries out the reaction tRNA(Thr) + L-threonine + ATP = L-threonyl-tRNA(Thr) + AMP + diphosphate + H(+). Catalyzes the attachment of threonine to tRNA(Thr) in a two-step reaction: L-threonine is first activated by ATP to form Thr-AMP and then transferred to the acceptor end of tRNA(Thr). Also edits incorrectly charged L-seryl-tRNA(Thr). The chain is Threonine--tRNA ligase from Leuconostoc mesenteroides subsp. mesenteroides (strain ATCC 8293 / DSM 20343 / BCRC 11652 / CCM 1803 / JCM 6124 / NCDO 523 / NBRC 100496 / NCIMB 8023 / NCTC 12954 / NRRL B-1118 / 37Y).